Reading from the N-terminus, the 728-residue chain is Catalase-peroxidase 2 (728 aa).

The segment at 1-20 (MSNEGKCPFNHGKRNGTTNR) is disordered. Positions 91-214 (WHSAGTYRTG…LAAVQMGLIY (124 aa)) form a cross-link, tryptophyl-tyrosyl-methioninium (Trp-Tyr) (with M-240). The active-site Proton acceptor is the His92. A cross-link (tryptophyl-tyrosyl-methioninium (Tyr-Met) (with W-91)) is located at residues 214–240 (YVNPEGPNGNPDPLASARDIRETFARM). A heme b-binding site is contributed by His255. Positions 335-355 (AHQWQPKGGAGADSVPDPFEP) are disordered.

Belongs to the peroxidase family. Peroxidase/catalase subfamily. Homodimer or homotetramer. Requires heme b as cofactor. Formation of the three residue Trp-Tyr-Met cross-link is important for the catalase, but not the peroxidase activity of the enzyme.

The catalysed reaction is H2O2 + AH2 = A + 2 H2O. The enzyme catalyses 2 H2O2 = O2 + 2 H2O. Its function is as follows. Bifunctional enzyme with both catalase and broad-spectrum peroxidase activity. In Burkholderia cenocepacia (strain HI2424), this protein is Catalase-peroxidase 2.